The chain runs to 185 residues: Ribosome-recycling factor (185 aa).

The protein belongs to the RRF family.

The protein localises to the cytoplasm. Responsible for the release of ribosomes from messenger RNA at the termination of protein biosynthesis. May increase the efficiency of translation by recycling ribosomes from one round of translation to another. This is Ribosome-recycling factor from Legionella pneumophila (strain Corby).